The chain runs to 152 residues: Methylglyoxal synthase (152 aa).

Residues 6 to 152 form the MGS-like domain; the sequence is RTMATAKNIA…YQHYLNGRLK (147 aa). Substrate-binding positions include histidine 19, lysine 23, 45 to 48, and 65 to 66; these read TGTT and SG. Aspartate 71 acts as the Proton donor/acceptor in catalysis. Residue histidine 98 participates in substrate binding.

Belongs to the methylglyoxal synthase family.

The catalysed reaction is dihydroxyacetone phosphate = methylglyoxal + phosphate. In terms of biological role, catalyzes the formation of methylglyoxal from dihydroxyacetone phosphate. This chain is Methylglyoxal synthase, found in Photorhabdus laumondii subsp. laumondii (strain DSM 15139 / CIP 105565 / TT01) (Photorhabdus luminescens subsp. laumondii).